Reading from the N-terminus, the 199-residue chain is dITP/XTP pyrophosphatase (199 aa).

7–12 (SNNRGK) is a binding site for substrate. Mg(2+) contacts are provided by D39 and D68. Residue D68 is the Proton acceptor of the active site. Residues A69, 154-157 (FGFD), K177, and 182-183 (HR) each bind substrate.

This sequence belongs to the HAM1 NTPase family. As to quaternary structure, homodimer. Mg(2+) is required as a cofactor.

It carries out the reaction XTP + H2O = XMP + diphosphate + H(+). The catalysed reaction is dITP + H2O = dIMP + diphosphate + H(+). It catalyses the reaction ITP + H2O = IMP + diphosphate + H(+). Pyrophosphatase that catalyzes the hydrolysis of nucleoside triphosphates to their monophosphate derivatives, with a high preference for the non-canonical purine nucleotides XTP (xanthosine triphosphate), dITP (deoxyinosine triphosphate) and ITP. Seems to function as a house-cleaning enzyme that removes non-canonical purine nucleotides from the nucleotide pool, thus preventing their incorporation into DNA/RNA and avoiding chromosomal lesions. The protein is dITP/XTP pyrophosphatase of Paracidovorax citrulli (strain AAC00-1) (Acidovorax citrulli).